A 197-amino-acid chain; its full sequence is Guanylyl cyclase-activating protein 2 (197 aa).

Glycine 2 carries N-myristoyl glycine lipidation. EF-hand domains are found at residues 15–50 (DVAE…QDNQ), 51–86 (EAAD…VLRG), 87–122 (KLEH…IYNL), and 138–173 (SPEQ…DKWV). Ca(2+) is bound by residues aspartate 64, asparagine 66, aspartate 68, threonine 70, glutamate 75, aspartate 100, aspartate 102, asparagine 104, cysteine 106, glutamate 111, aspartate 151, asparagine 153, aspartate 155, glutamine 157, and glutamate 162.

As to expression, low expression in retina.

In terms of biological role, stimulates guanylyl cyclase 1 (GC1) and GC2 when free calcium ions concentration is low and inhibits guanylyl cyclases when free calcium ions concentration is elevated. This Ca(2+)-sensitive regulation of guanylyl cyclase (GC) is a key event in recovery of the dark state of rod photoreceptors following light exposure. In Lithobates pipiens (Northern leopard frog), this protein is Guanylyl cyclase-activating protein 2 (GUCA1B).